Here is a 298-residue protein sequence, read N- to C-terminus: tRNA pseudouridine synthase B (298 aa).

The active-site Nucleophile is aspartate 42.

The protein belongs to the pseudouridine synthase TruB family. Type 1 subfamily.

The enzyme catalyses uridine(55) in tRNA = pseudouridine(55) in tRNA. Its function is as follows. Responsible for synthesis of pseudouridine from uracil-55 in the psi GC loop of transfer RNAs. This Mycobacterium tuberculosis (strain CDC 1551 / Oshkosh) protein is tRNA pseudouridine synthase B.